A 218-amino-acid chain; its full sequence is Ras-related protein Rab-42 (218 aa).

5 residues coordinate GTP: alanine 19, glycine 21, lysine 22, threonine 23, and threonine 46. Mg(2+)-binding residues include threonine 23, threonine 46, and aspartate 70. Residues glycine 73, lysine 130, aspartate 132, valine 160, and lysine 161 each coordinate GTP. 2 S-geranylgeranyl cysteine lipidation sites follow: cysteine 216 and cysteine 218.

The protein belongs to the small GTPase superfamily. Rab family. Mg(2+) is required as a cofactor.

The protein localises to the membrane. The enzyme catalyses GTP + H2O = GDP + phosphate + H(+). Regulated by guanine nucleotide exchange factors (GEFs) which promote the exchange of bound GDP for free GTP. Regulated by GTPase activating proteins (GAPs) which increase the GTP hydrolysis activity. Inhibited by GDP dissociation inhibitors (GDIs). Functionally, the small GTPases Rab are key regulators of intracellular membrane trafficking, from the formation of transport vesicles to their fusion with membranes. Rabs cycle between an inactive GDP-bound form and an active GTP-bound form that is able to recruit to membranes different sets of downstream effectors directly responsible for vesicle formation, movement, tethering and fusion. The physiological function of RAB42 remains undefined. The chain is Ras-related protein Rab-42 from Homo sapiens (Human).